Consider the following 314-residue polypeptide: Probable cell division protein WhiA (314 aa).

A DNA-binding region (H-T-H motif) is located at residues 282-314 (SLKELGELCRPPVSKSGAAHRMRQLMALAESLE).

It belongs to the WhiA family.

Functionally, involved in cell division and chromosome segregation. This chain is Probable cell division protein WhiA, found in Symbiobacterium thermophilum (strain DSM 24528 / JCM 14929 / IAM 14863 / T).